Consider the following 284-residue polypeptide: Tropomyosin (284 aa).

Residues 1-273 are a coiled coil; that stretch reads MDAIKKKMVA…KEKYKAISDE (273 aa). The segment covering 110–130 has biased composition (basic and acidic residues); the sequence is SGKLEEASKAADESERNRKVL. The tract at residues 110–134 is disordered; it reads SGKLEEASKAADESERNRKVLENLN.

The protein belongs to the tropomyosin family. As to quaternary structure, homodimer.

Its function is as follows. Tropomyosin, in association with the troponin complex, plays a central role in the calcium dependent regulation of muscle contraction. The sequence is that of Tropomyosin from Perna viridis (Asian green mussel).